The sequence spans 205 residues: Protein N-terminal glutamine amidohydrolase (205 aa).

Catalysis depends on residues cysteine 20, histidine 74, and aspartate 90.

Belongs to the NTAQ1 family. Monomer.

It catalyses the reaction N-terminal L-glutaminyl-[protein] + H2O = N-terminal L-glutamyl-[protein] + NH4(+). Mediates the side-chain deamidation of N-terminal glutamine residues to glutamate, an important step in N-end rule pathway of protein degradation. Conversion of the resulting N-terminal glutamine to glutamate renders the protein susceptible to arginylation, polyubiquitination and degradation as specified by the N-end rule. Does not act on substrates with internal or C-terminal glutamine and does not act on non-glutamine residues in any position. This Drosophila grimshawi (Hawaiian fruit fly) protein is Protein N-terminal glutamine amidohydrolase (tun).